The sequence spans 311 residues: Transcription factor MafB (311 aa).

Disordered stretches follow at residues 35–78 (PLGR…PTEQ) and 150–199 (EDLA…EDRF). Low complexity predominate over residues 54 to 76 (SVSSTPISTPCSSVPSSPSFSPT). Residues 157–167 (HPHHHHHHHHQ) are compositionally biased toward basic residues. Residues 168 to 194 (ASPTPSTSSSSSQQLQTSHQQHPPSSS) are compositionally biased toward low complexity. Positions 226–251 (RLKQKRRTLKNRGYAQSCRYKRVQQK) are basic motif. Residues 226–289 (RLKQKRRTLK…DAYKLKCEKL (64 aa)) enclose the bZIP domain. Residues 254 to 275 (LENEKTQLIQQVEQLKQEVTRL) form a leucine-zipper region.

This sequence belongs to the bZIP family. Maf subfamily. In terms of assembly, homodimer or heterodimer with other bHLH-Zip transcription factors. Binds DNA as a homodimer or heterodimer. Self-associates; the interaction requires the intact MAFB leucine-zipper domain. Interacts with FOS, HOXD12 and PRRX1. In terms of tissue distribution, expressed in brain, thymus, gut, lung, mesenterium, spleen, kidney, ovary and bursa.

It is found in the nucleus. In terms of biological role, acts as a transcriptional activator or repressor. Positively regulates the expression of alpha-A crystallin genes during lens fiber cell differentiation. Binds to Maf recognition elements (MARE). The sequence is that of Transcription factor MafB (MAFB) from Gallus gallus (Chicken).